We begin with the raw amino-acid sequence, 86 residues long: Large ribosomal subunit protein bL27 (86 aa).

The tract at residues 1 to 24 (MAHKKAMGSTENTRDSNPSYLGVK) is disordered. Residues 9-19 (STENTRDSNPS) show a composition bias toward polar residues.

It belongs to the bacterial ribosomal protein bL27 family.

The chain is Large ribosomal subunit protein bL27 from Salinibacter ruber (strain DSM 13855 / M31).